Reading from the N-terminus, the 380-residue chain is Queuine tRNA-ribosyltransferase (380 aa).

Aspartate 95 functions as the Proton acceptor in the catalytic mechanism. Substrate-binding positions include 95-99 (DSGGF), aspartate 149, glutamine 192, and glycine 219. Positions 250-256 (GVGSADA) are RNA binding. Aspartate 269 functions as the Nucleophile in the catalytic mechanism. The interval 274-278 (TRIAR) is RNA binding; important for wobble base 34 recognition. Cysteine 307, cysteine 309, cysteine 312, and histidine 338 together coordinate Zn(2+).

Belongs to the queuine tRNA-ribosyltransferase family. As to quaternary structure, homodimer. Within each dimer, one monomer is responsible for RNA recognition and catalysis, while the other monomer binds to the replacement base PreQ1. It depends on Zn(2+) as a cofactor.

It catalyses the reaction 7-aminomethyl-7-carbaguanine + guanosine(34) in tRNA = 7-aminomethyl-7-carbaguanosine(34) in tRNA + guanine. It functions in the pathway tRNA modification; tRNA-queuosine biosynthesis. In terms of biological role, catalyzes the base-exchange of a guanine (G) residue with the queuine precursor 7-aminomethyl-7-deazaguanine (PreQ1) at position 34 (anticodon wobble position) in tRNAs with GU(N) anticodons (tRNA-Asp, -Asn, -His and -Tyr). Catalysis occurs through a double-displacement mechanism. The nucleophile active site attacks the C1' of nucleotide 34 to detach the guanine base from the RNA, forming a covalent enzyme-RNA intermediate. The proton acceptor active site deprotonates the incoming PreQ1, allowing a nucleophilic attack on the C1' of the ribose to form the product. After dissociation, two additional enzymatic reactions on the tRNA convert PreQ1 to queuine (Q), resulting in the hypermodified nucleoside queuosine (7-(((4,5-cis-dihydroxy-2-cyclopenten-1-yl)amino)methyl)-7-deazaguanosine). The sequence is that of Queuine tRNA-ribosyltransferase from Lactiplantibacillus plantarum (strain ATCC BAA-793 / NCIMB 8826 / WCFS1) (Lactobacillus plantarum).